Here is a 110-residue protein sequence, read N- to C-terminus: Large ribosomal subunit protein uL22 (110 aa).

The protein belongs to the universal ribosomal protein uL22 family. Part of the 50S ribosomal subunit.

Its function is as follows. This protein binds specifically to 23S rRNA; its binding is stimulated by other ribosomal proteins, e.g. L4, L17, and L20. It is important during the early stages of 50S assembly. It makes multiple contacts with different domains of the 23S rRNA in the assembled 50S subunit and ribosome. In terms of biological role, the globular domain of the protein is located near the polypeptide exit tunnel on the outside of the subunit, while an extended beta-hairpin is found that lines the wall of the exit tunnel in the center of the 70S ribosome. The chain is Large ribosomal subunit protein uL22 from Paraburkholderia phytofirmans (strain DSM 17436 / LMG 22146 / PsJN) (Burkholderia phytofirmans).